Here is a 130-residue protein sequence, read N- to C-terminus: Small ribosomal subunit protein uS11c (130 aa).

Belongs to the universal ribosomal protein uS11 family. In terms of assembly, part of the 30S ribosomal subunit.

It localises to the plastid. The protein resides in the chloroplast. The chain is Small ribosomal subunit protein uS11c from Pyropia yezoensis (Susabi-nori).